The sequence spans 74 residues: uncharacterized protein (74 aa).

Residues 1–19 (MIGLIVVPILFAIKGIVVG) form the signal peptide. Residues 26-74 (KFGKHSNTKDQKEDKDEDKRQSISQRKQHTEWPIEENRIQRRAPNQSAL) form a disordered region. Basic and acidic residues-rich tracts occupy residues 32-46 (NTKD…DKRQ) and 53-64 (QHTEWPIEENRI).

This is an uncharacterized protein from Saccharomyces cerevisiae (strain ATCC 204508 / S288c) (Baker's yeast).